Consider the following 177-residue polypeptide: Large ribosomal subunit protein uL6 (177 aa).

Belongs to the universal ribosomal protein uL6 family. In terms of assembly, part of the 50S ribosomal subunit.

This protein binds to the 23S rRNA, and is important in its secondary structure. It is located near the subunit interface in the base of the L7/L12 stalk, and near the tRNA binding site of the peptidyltransferase center. The sequence is that of Large ribosomal subunit protein uL6 from Neisseria meningitidis serogroup C (strain 053442).